The primary structure comprises 162 residues: Glutathione peroxidase-like peroxiredoxin 2 (162 aa).

Cysteine 37 serves as the catalytic Cysteine sulfenic acid (-SOH) intermediate. An intrachain disulfide couples cysteine 37 to cysteine 83.

The protein belongs to the glutathione peroxidase family. As to quaternary structure, monomer.

Its subcellular location is the cytoplasm. The protein localises to the nucleus. It is found in the mitochondrion outer membrane. The protein resides in the mitochondrion inner membrane. The catalysed reaction is a hydroperoxide + [thioredoxin]-dithiol = an alcohol + [thioredoxin]-disulfide + H2O. Glutathione peroxidase-like protein that protects cells from phospholipid hydroperoxides and nonphospholipid peroxides during oxidative stress. Plays an important role in the oxidative stress-induced response in the presence of Ca(2+). Has peroxidase activity using preferentially thioredoxin as a reducing power. The redox state of the mitochondrial GPX2 is regulated by TRX1 and TRX2 (cytoplasmic thioredoxin), and by TRX3 (mitochondrial matrix thioredoxin). Involved in sporulation. The polypeptide is Glutathione peroxidase-like peroxiredoxin 2 (Saccharomyces cerevisiae (strain ATCC 204508 / S288c) (Baker's yeast)).